The following is a 129-amino-acid chain: M-zodatoxin-Lt8e (129 aa).

Residues 1–20 (MKYFVVALALVAAFVCIAES) form the signal peptide. The propeptide occupies 21-60 (KPAESEHELAEVEEENELADLEDAVWLEHLADLSDLEEAR). The Processing quadruplet motif motif lies at 57–60 (EEAR).

Post-translationally, cleavage of the propeptide depends on the processing quadruplet motif (XXXR, with at least one of X being E). Expressed by the venom gland.

It is found in the secreted. In terms of biological role, insecticidal, cytolytic and antimicrobial peptide. Forms voltage-dependent, ion-permeable channels in membranes. At high concentration causes cell membrane lysis. This Lachesana tarabaevi (Spider) protein is M-zodatoxin-Lt8e (cit 1-5).